Reading from the N-terminus, the 461-residue chain is V-type ATP synthase beta chain (461 aa).

This sequence belongs to the ATPase alpha/beta chains family.

In terms of biological role, produces ATP from ADP in the presence of a proton gradient across the membrane. The V-type beta chain is a regulatory subunit. This is V-type ATP synthase beta chain from Streptococcus pneumoniae (strain CGSP14).